The primary structure comprises 164 residues: Phosphohistidine phosphatase SixA homolog (164 aa).

This sequence belongs to the SixA phosphatase family.

This chain is Phosphohistidine phosphatase SixA homolog (sixA-A), found in Haemophilus influenzae (strain ATCC 51907 / DSM 11121 / KW20 / Rd).